We begin with the raw amino-acid sequence, 436 residues long: Enolase (436 aa).

Q167 is a binding site for (2R)-2-phosphoglycerate. The active-site Proton donor is the E209. Mg(2+) is bound by residues D246, E291, and D318. The (2R)-2-phosphoglycerate site is built by K343, R372, S373, and K394. Residue K343 is the Proton acceptor of the active site.

Belongs to the enolase family. Component of the RNA degradosome, a multiprotein complex involved in RNA processing and mRNA degradation. The cofactor is Mg(2+).

It is found in the cytoplasm. It localises to the secreted. The protein resides in the cell surface. It catalyses the reaction (2R)-2-phosphoglycerate = phosphoenolpyruvate + H2O. Its pathway is carbohydrate degradation; glycolysis; pyruvate from D-glyceraldehyde 3-phosphate: step 4/5. Catalyzes the reversible conversion of 2-phosphoglycerate (2-PG) into phosphoenolpyruvate (PEP). It is essential for the degradation of carbohydrates via glycolysis. In Actinobacillus pleuropneumoniae serotype 5b (strain L20), this protein is Enolase.